A 312-amino-acid polypeptide reads, in one-letter code: Olfactory receptor 4F3/4F16/4F29 (312 aa).

Topologically, residues 1–25 (MDGENHSVVSEFLFLGLTHSWEIQL) are extracellular. Asn5 is a glycosylation site (N-linked (GlcNAc...) asparagine). A helical membrane pass occupies residues 26 to 49 (LLLVFSSVLYVASITGNILIVFSV). At 50 to 57 (TTDPHLHS) the chain is on the cytoplasmic side. Residues 58-79 (PMYFLLASLSFIDLGACSVTSP) form a helical membrane-spanning segment. Topologically, residues 80 to 100 (KMIYDLFRKRKVISFGGCIAQ) are extracellular. The cysteines at positions 97 and 189 are disulfide-linked. A helical transmembrane segment spans residues 101–120 (IFFIHVVGGVEMVLLIAMAF). Residues 121 to 139 (DRYVALCKPLHYLTIMSPR) are Cytoplasmic-facing. Residues 140 to 158 (MCLSFLAVAWTLGVSHSLF) traverse the membrane as a helical segment. Residues 159-195 (QLAFLVNLAFCGPNVLDSFYCDLPRLLRLACTDTYRL) are Extracellular-facing. The helical transmembrane segment at 196–219 (QFMVTVNSGFICVGTFFILLISYV) threads the bilayer. The Cytoplasmic portion of the chain corresponds to 220-235 (FILFTVWKHSSGGSSK). The helical transmembrane segment at 236-258 (ALSTLSAHSTVVLLFFGPPMFVY) threads the bilayer. Residues 259–269 (TRPHPNSQMDK) are Extracellular-facing. A helical transmembrane segment spans residues 270-289 (FLAIFDAVLTPFLNPVVYTF). The Cytoplasmic portion of the chain corresponds to 290 to 312 (RNKEMKAAIKRVCKQLVIYKRIS).

This sequence belongs to the G-protein coupled receptor 1 family.

The protein resides in the cell membrane. Its function is as follows. Odorant receptor. The chain is Olfactory receptor 4F3/4F16/4F29 (OR4F3) from Homo sapiens (Human).